A 343-amino-acid polypeptide reads, in one-letter code: Pentatricopeptide repeat-containing protein At1g06270 (343 aa).

6 PPR repeats span residues 98–133, 134–169, 170–204, 205–240, 241–275, and 276–310; these read PKIV…GCLP, NPQT…GYSP, DTGT…GCIP, DVES…GISP, RKGM…DYPV, and EFES…GFIP.

It belongs to the PPR family. P subfamily.

The chain is Pentatricopeptide repeat-containing protein At1g06270 from Arabidopsis thaliana (Mouse-ear cress).